Consider the following 214-residue polypeptide: Melanoregulin (214 aa).

Positions 162–172 (LSERYLFVVDR) match the Cholesterol-binding sequence motif motif. Position 213 is a phosphoserine (S213).

This sequence belongs to the melanoregulin family. In terms of assembly, identified in a complex with RILP and DCTN1; interacts directly with RILP, but does not interact directly with DCTN1. Interacts with PRPH2. In terms of processing, palmitoylated. Palmitoylation is required to maintain the protein at the melanosome membrane. In terms of tissue distribution, expressed in photoreceptor cells (at protein level).

It localises to the apical cell membrane. Its subcellular location is the melanosome membrane. It is found in the lysosome membrane. The protein localises to the cytoplasmic vesicle membrane. Its function is as follows. Probably functions as a cargo-recognition protein that couples cytoplasmic vesicles to the transport machinery. Plays a role in hair pigmentation, a process that involves shedding of melanosome-containing vesicles from melanocytes, followed by phagocytosis of the melanosome-containing vesicles by keratinocytes. Functions on melanosomes as receptor for RILP and the complex formed by RILP and DCTN1, and thereby contributes to retrograde melanosome transport from the cell periphery to the center. Overexpression causes accumulation of late endosomes and/or lysosomes at the microtubule organising center (MTOC) at the center of the cell. Probably binds cholesterol and requires the presence of cholesterol in membranes to function in microtubule-mediated retrograde organelle transport. Binds phosphatidylinositol 3-phosphate, phosphatidylinositol 4-phosphate, phosphatidylinositol 5-phosphate and phosphatidylinositol 3,5-bisphosphate, but not phosphatidylinositol 3,4-bisphosphate or phosphatidylinositol 4,5-bisphosphate. Required for normal phagosome clearing and normal activation of lysosomal enzymes in lysosomes from retinal pigment epithelium cells. Required for normal degradation of the lipofuscin component N-retinylidene-N-retinylethanolamine (A2E) in the eye. May function in membrane fusion and regulate the biogenesis of disk membranes of photoreceptor rod cells. This chain is Melanoregulin (MREG), found in Homo sapiens (Human).